The sequence spans 101 residues: UPF0751 protein DSY3086 (101 aa).

Belongs to the UPF0751 family.

The sequence is that of UPF0751 protein DSY3086 from Desulfitobacterium hafniense (strain Y51).